The chain runs to 955 residues: Leucine-rich repeat-containing G-protein coupled receptor 4 (955 aa).

An N-terminal signal peptide occupies residues 1–21 (MGCPGWPLALFALLLASCSGG). Residues 22–547 (PSGVSSPAPC…LLGSWMIRLT (526 aa)) are Extracellular-facing. The region spanning 26–59 (SSPAPCPAPCACDLDGGADCSGKGLVTVPDGLSV) is the LRRNT domain. 2 cysteine pairs are disulfide-bonded: cysteine 31/cysteine 37 and cysteine 35/cysteine 45. 10 LRR repeats span residues 57–81 (LSVF…AFKG), 83–105 (PYLE…ALSG), 106–129 (LKEL…SLKG), 131–153 (VSLQ…SFEG), 155–177 (VQLR…PLSN), 178–201 (LPSL…AFSN), 203–225 (SSLV…CFHG), 226–249 (LDNL…IRSL), 250–272 (PNLK…AFVK), and 274–296 (PLLR…AFQN). Residue asparagine 201 is glycosylated (N-linked (GlcNAc...) asparagine). Residues asparagine 296 and asparagine 316 are each glycosylated (N-linked (GlcNAc...) asparagine). LRR repeat units follow at residues 320–343 (TNNL…FCQE), 345–365 (KMLR…GFEG), 366–389 (CSSL…TFQG), 390–413 (LAAL…AFVT), and 415–437 (KALT…GLHG). Residues cysteine 341 and cysteine 366 are joined by a disulfide bond. N-linked (GlcNAc...) asparagine glycosylation is present at asparagine 384. 2 cysteine pairs are disulfide-bonded: cysteine 472–cysteine 525 and cysteine 473–cysteine 478. A helical membrane pass occupies residues 548 to 568 (VWFIFLLALIFNVIVIVTMFA). The Cytoplasmic segment spans residues 569 to 578 (SCSQLTSSKL). The chain crosses the membrane as a helical span at residues 579-599 (FIGLIAVSNLFMGVYTGTLTV). Residues 600–623 (LDTISWGQFAEFGIWWETGNGCKV) are Extracellular-facing. A disulfide bridge links cysteine 621 with cysteine 696. Residues 624–644 (AGFLAIFSSESAIFFLMLAAI) form a helical membrane-spanning segment. Residues 645–666 (ERSLSAKDIIKKEKHQHLRKFQ) lie on the Cytoplasmic side of the membrane. The helical transmembrane segment at 667-687 (VASLLAVLLAAAAGCLPLFHI) threads the bilayer. Over 688-706 (GEFSSSPLCLPFPTGETPS) the chain is Extracellular. The helical transmembrane segment at 707–727 (LGFTVTLVLLNSLAFLIMVIT) threads the bilayer. The Cytoplasmic portion of the chain corresponds to 728–759 (YTKLYCTIEKEDLSENAESSMIKHVAWLIFTN). A helical membrane pass occupies residues 760 to 780 (CIFFCPVAFFSFAPLITAIYI). Residues 781 to 786 (SPEIMK) lie on the Extracellular side of the membrane. The chain crosses the membrane as a helical span at residues 787–807 (SVTLIFLPLPACLNPVLYVFF). Residues 808–955 (NPKFKEDWKL…YAYNIPRMKD (148 aa)) lie on the Cytoplasmic side of the membrane.

This sequence belongs to the G-protein coupled receptor 1 family.

The protein localises to the cell membrane. Its function is as follows. Receptor for R-spondins that potentiates the canonical Wnt signaling pathway and is involved in the formation of various organs. Upon binding to R-spondins (RSPO1, RSPO2, RSPO3 or RSPO4), associates with phosphorylated LRP6 and frizzled receptors that are activated by extracellular Wnt receptors, triggering the canonical Wnt signaling pathway to increase expression of target genes. In contrast to classical G-protein coupled receptors, does not activate heterotrimeric G-proteins to transduce the signal. Its function as activator of the Wnt signaling pathway is required for the development of various organs, including liver, kidney, intestine, bone, reproductive tract and eye. May play a role in regulating the circadian rhythms of plasma lipids. Required for proper development of GnRH neurons (gonadotropin-releasing hormone expressing neurons) that control the release of reproductive hormones from the pituitary gland. The sequence is that of Leucine-rich repeat-containing G-protein coupled receptor 4 (lgr4) from Xenopus tropicalis (Western clawed frog).